Consider the following 171-residue polypeptide: Co-chaperone protein HscB (171 aa).

A J domain is found at 2-74 (DYFTLFGLPA…LTRAEYLLSL (73 aa)).

It belongs to the HscB family. In terms of assembly, interacts with HscA and stimulates its ATPase activity. Interacts with IscU.

In terms of biological role, co-chaperone involved in the maturation of iron-sulfur cluster-containing proteins. Seems to help targeting proteins to be folded toward HscA. The sequence is that of Co-chaperone protein HscB from Klebsiella pneumoniae (strain 342).